A 1499-amino-acid chain; its full sequence is Ring canal kelch homolog (1499 aa).

Residues Leu-56–Arg-66 show a composition bias toward polar residues. The segment at Leu-56–Gly-75 is disordered. Residues Cys-100–Glu-166 form the BTB domain. Kelch repeat units lie at residues Val-351–Asp-396, Lys-397–Asn-443, Cys-444–Gly-490, Leu-492–Asn-539, Leu-541–Gly-586, and Leu-588–Lys-634. A non-standard amino acid (selenocysteine) is located at residue Sec-637. Disordered regions lie at residues Ala-679–Val-714, Leu-750–Gly-786, Ala-825–Leu-856, Asn-984–Val-1017, Ser-1033–Gly-1085, Ala-1107–Val-1160, Gln-1301–Thr-1321, and Ala-1334–Glu-1499. Over residues Asn-698–Asn-713 the composition is skewed to low complexity. Residues Gly-776 to Gly-786 are compositionally biased toward gly residues. A compositionally biased stretch (low complexity) spans Ser-986–Ala-1003. The segment covering Thr-1004 to Val-1017 has biased composition (polar residues). A compositionally biased stretch (low complexity) spans Ser-1040–Ala-1054. The segment covering Ile-1065 to Gly-1085 has biased composition (gly residues). A compositionally biased stretch (low complexity) spans Ala-1107–Gly-1119. Positions Gly-1135–Gln-1147 are enriched in polar residues. Basic and acidic residues predominate over residues Asn-1348–Thr-1359. A compositionally biased stretch (low complexity) spans Ser-1401–Asp-1410. The segment covering Val-1460–Leu-1471 has biased composition (polar residues).

Its subcellular location is the cytoplasm. It is found in the cytoskeleton. Its function is as follows. May play a role in organizing the actin cytoskeleton. This is Ring canal kelch homolog from Anopheles stephensi (Indo-Pakistan malaria mosquito).